The following is a 113-amino-acid chain: Dolichyl-diphosphooligosaccharide--protein glycosyltransferase subunit DAD1 (113 aa).

Residue S2 is modified to N-acetylserine. Over 2 to 30 the chain is Cytoplasmic; sequence SASVLSVISRFLEEYLSSTPQRLKLLDAY. The helical transmembrane segment at 31 to 51 threads the bilayer; that stretch reads LLYILLTGALQFGYCLLVGTF. A topological domain (lumenal) is located at residue P52. A helical transmembrane segment spans residues 53 to 73; sequence FNSFLSGFISCVGSFILAVCL. The Cytoplasmic portion of the chain corresponds to 74–92; it reads RIQINPQNKADFQGISPER. Residues 93-113 form a helical membrane-spanning segment; that stretch reads AFADFLFASTILHLVVMNFVG.

The protein belongs to the DAD/OST2 family. Component of the oligosaccharyltransferase (OST) complex. OST exists in two different complex forms which contain common core subunits RPN1, RPN2, OST48, OST4, DAD1 and TMEM258, either STT3A or STT3B as catalytic subunits, and form-specific accessory subunits. STT3A complex assembly occurs through the formation of 3 subcomplexes. Subcomplex 1 contains RPN1 and TMEM258, subcomplex 2 contains the STT3A-specific subunits STT3A, DC2/OSTC, and KCP2 as well as the core subunit OST4, and subcomplex 3 contains RPN2, DAD1, and OST48. The STT3A complex can form stable complexes with the Sec61 complex or with both the Sec61 and TRAP complexes.

The protein resides in the endoplasmic reticulum membrane. It participates in protein modification; protein glycosylation. In terms of biological role, subunit of the oligosaccharyl transferase (OST) complex that catalyzes the initial transfer of a defined glycan (Glc(3)Man(9)GlcNAc(2) in eukaryotes) from the lipid carrier dolichol-pyrophosphate to an asparagine residue within an Asn-X-Ser/Thr consensus motif in nascent polypeptide chains, the first step in protein N-glycosylation. N-glycosylation occurs cotranslationally and the complex associates with the Sec61 complex at the channel-forming translocon complex that mediates protein translocation across the endoplasmic reticulum (ER). All subunits are required for a maximal enzyme activity. The protein is Dolichyl-diphosphooligosaccharide--protein glycosyltransferase subunit DAD1 of Sus scrofa (Pig).